The following is a 135-amino-acid chain: ATP synthase epsilon chain (135 aa).

This sequence belongs to the ATPase epsilon chain family. As to quaternary structure, F-type ATPases have 2 components, CF(1) - the catalytic core - and CF(0) - the membrane proton channel. CF(1) has five subunits: alpha(3), beta(3), gamma(1), delta(1), epsilon(1). CF(0) has three main subunits: a, b and c.

It localises to the cell inner membrane. Produces ATP from ADP in the presence of a proton gradient across the membrane. The chain is ATP synthase epsilon chain from Mesorhizobium japonicum (strain LMG 29417 / CECT 9101 / MAFF 303099) (Mesorhizobium loti (strain MAFF 303099)).